The sequence spans 2323 residues: C2 domain-containing protein 3 (2323 aa).

Disordered regions lie at residues 1 to 27, 193 to 215, 402 to 426, 444 to 509, 537 to 556, and 698 to 745; these read MKQR…SPST, RELR…SCRG, WNGL…DLND, SDVG…HTPA, PDSP…PPKP, and KLSS…TKKT. The segment covering 200-209 has biased composition (polar residues); that stretch reads ESSNTQSMIP. Residue S453 is modified to Phosphoserine. The span at 474-483 shows a compositional bias: basic and acidic residues; sequence KVVESKEQKQ. One can recognise a C2 1 domain in the interval 504–663; it reads PGHTPAMSLS…IQSELLSFSS (160 aa). The segment covering 698-735 has biased composition (polar residues); that stretch reads KLSSSTQPAPVSAATSSDTILPETGQDTACTRNPQSSN. S713 bears the Phosphoserine mark. 4 consecutive C2 domains span residues 771 to 903, 969 to 1131, 1155 to 1323, and 1383 to 1517; these read SCNL…SRLL, QPPV…YRED, SSGF…TGWY, and KEEE…TLTI. Basic and acidic residues predominate over residues 1550-1574; that stretch reads EPARELDSMDCSSHSESEQHPRKSD. Disordered stretches follow at residues 1550 to 1599 and 1798 to 1824; these read EPAR…NSAA and LAHT…AARH. Over residues 1584-1599 the composition is skewed to polar residues; it reads LQTSPTSTQVHGNSAA. The C2 6 domain occupies 1598 to 1726; the sequence is AAAQVCPAQE…SGFQFICGWY (129 aa). S1871 is subject to Phosphoserine. Disordered regions lie at residues 1891 to 1918, 1952 to 2013, 2074 to 2163, 2182 to 2231, and 2261 to 2323; these read FSSQ…GRQD, ALTS…GGML, SEVL…SVGW, SEAF…EVST, and SHSP…TEET. The segment covering 1892 to 1904 has biased composition (low complexity); it reads SSQSSPAVSQSQE. 2 stretches are compositionally biased toward polar residues: residues 1952–1965 and 2074–2083; these read ALTS…SRAV and SEVLSPQPTE. Residues 2110 to 2125 show a composition bias toward low complexity; sequence AVSPQPAQGSPSQSGV. Polar residues predominate over residues 2147 to 2158; it reads PSLTFSEAQEGS. Low complexity predominate over residues 2182-2197; it reads SEAFSSEFSDSSESFE. A compositionally biased stretch (basic and acidic residues) spans 2207 to 2216; the sequence is SKREDYKDSP. The span at 2222–2231 shows a compositional bias: polar residues; sequence QVPTGSEVST.

As to quaternary structure, interacts with OFD1; OFD1 may act as a negative regulator of C2CD3. Associates with the BBSome complex. Interacts with IFT88, BBS4 and PCM1.

The protein localises to the cytoplasm. The protein resides in the cytoskeleton. It is found in the cilium basal body. Its subcellular location is the microtubule organizing center. It localises to the centrosome. The protein localises to the centriole. Component of the centrioles that acts as a positive regulator of centriole elongation. Promotes assembly of centriolar distal appendage, a structure at the distal end of the mother centriole that acts as an anchor of the cilium, and is required for recruitment of centriolar distal appendages proteins CEP83, SCLT1, CEP89, FBF1 and CEP164. Not required for centriolar satellite integrity or RAB8 activation. Required for primary cilium formation. Required for sonic hedgehog/SHH signaling and for proteolytic processing of GLI3. This Mus musculus (Mouse) protein is C2 domain-containing protein 3 (C2cd3).